A 155-amino-acid polypeptide reads, in one-letter code: Small ribosomal subunit protein uS7cz/uS7cy (155 aa).

The protein belongs to the universal ribosomal protein uS7 family. As to quaternary structure, part of the 30S ribosomal subunit.

Its subcellular location is the plastid. It localises to the chloroplast. Its function is as follows. One of the primary rRNA binding proteins, it binds directly to 16S rRNA where it nucleates assembly of the head domain of the 30S subunit. This is Small ribosomal subunit protein uS7cz/uS7cy (rps7-A) from Guizotia abyssinica (Niger).